The primary structure comprises 948 residues: Bifunctional glutamine synthetase adenylyltransferase/adenylyl-removing enzyme (948 aa).

The adenylyl removase stretch occupies residues 1 to 444 (MSLPSALLPT…VFATLIGEED (444 aa)). Positions 452–948 (ARHFHELWDM…VIQAWQQWLG (497 aa)) are adenylyl transferase.

It belongs to the GlnE family. Requires Mg(2+) as cofactor.

The catalysed reaction is [glutamine synthetase]-O(4)-(5'-adenylyl)-L-tyrosine + phosphate = [glutamine synthetase]-L-tyrosine + ADP. It catalyses the reaction [glutamine synthetase]-L-tyrosine + ATP = [glutamine synthetase]-O(4)-(5'-adenylyl)-L-tyrosine + diphosphate. In terms of biological role, involved in the regulation of glutamine synthetase GlnA, a key enzyme in the process to assimilate ammonia. When cellular nitrogen levels are high, the C-terminal adenylyl transferase (AT) inactivates GlnA by covalent transfer of an adenylyl group from ATP to specific tyrosine residue of GlnA, thus reducing its activity. Conversely, when nitrogen levels are low, the N-terminal adenylyl removase (AR) activates GlnA by removing the adenylyl group by phosphorolysis, increasing its activity. The regulatory region of GlnE binds the signal transduction protein PII (GlnB) which indicates the nitrogen status of the cell. The sequence is that of Bifunctional glutamine synthetase adenylyltransferase/adenylyl-removing enzyme from Vibrio cholerae serotype O1 (strain ATCC 39315 / El Tor Inaba N16961).